Consider the following 516-residue polypeptide: MPGSPPPENAPAVLWTCFGASGWRMLLMKQRRNEMKVLDLDCFDRKLPLICDLDGTLIKSDSLHENLFDAFFHSPQQLLRTIPNWFKGRPALKEALAKVRSVEPQALPYREQMLDLIRRARSAGRETYLVTAADQSIADDIISHLGGFDGAKGSSGSLNLKSRRKLQWLQESFPEGFIYAGDSAADLPIWEAASGAVLVGDGVKFESKLREAGVEVRTLSPEKSHPVKDWLSELRIHQWSKNVLIFVPLFLGRIADDFHAVLKTTFGFLAFGLIVSATYIINDLADLEADRAHATKRFRAIAAGRISVMNGFLACLVMLATGIGTALLLDHQFALVASVYLALTLAYSFRLKRVALLDVTVIGALFTLRIVMGQVLNGLAFSPWLFSFSVMFFISLALAKRHVEAMRACSNRKDTIEGRGYLPGDWPLTLGHGLASASASIVIMLLFLALEPRVTHLYHNPAWLYVAPLGVSIWLQRIWLLSHRMELHDDPIVFALNDKTSWFIGALIASAFVMAM.

9 consecutive transmembrane segments (helical) span residues 183–203 (SAAD…GDGV), 261–281 (VLKT…TYII), 308–328 (VMNG…TALL), 329–349 (LDHQ…AYSF), 356–376 (LLDV…GQVL), 379–399 (LAFS…LALA), 430–450 (LGHG…FLAL), 461–481 (PAWL…IWLL), and 492–512 (IVFA…ASAF).

Its subcellular location is the cell membrane. In terms of biological role, possible permease/transporter. This is an uncharacterized protein from Sinorhizobium fredii (strain NBRC 101917 / NGR234).